A 455-amino-acid polypeptide reads, in one-letter code: Probable glycine dehydrogenase (decarboxylating) subunit 1 (455 aa).

This sequence belongs to the GcvP family. N-terminal subunit subfamily. The glycine cleavage system is composed of four proteins: P, T, L and H. In this organism, the P 'protein' is a heterodimer of two subunits.

It carries out the reaction N(6)-[(R)-lipoyl]-L-lysyl-[glycine-cleavage complex H protein] + glycine + H(+) = N(6)-[(R)-S(8)-aminomethyldihydrolipoyl]-L-lysyl-[glycine-cleavage complex H protein] + CO2. In terms of biological role, the glycine cleavage system catalyzes the degradation of glycine. The P protein binds the alpha-amino group of glycine through its pyridoxal phosphate cofactor; CO(2) is released and the remaining methylamine moiety is then transferred to the lipoamide cofactor of the H protein. This is Probable glycine dehydrogenase (decarboxylating) subunit 1 from Saccharolobus islandicus (strain Y.G.57.14 / Yellowstone #1) (Sulfolobus islandicus).